A 582-amino-acid polypeptide reads, in one-letter code: Formate--tetrahydrofolate ligase (582 aa).

Position 65–72 (65–72) interacts with ATP; it reads TPLGEGKT.

The protein belongs to the formate--tetrahydrofolate ligase family.

It carries out the reaction (6S)-5,6,7,8-tetrahydrofolate + formate + ATP = (6R)-10-formyltetrahydrofolate + ADP + phosphate. It participates in one-carbon metabolism; tetrahydrofolate interconversion. This is Formate--tetrahydrofolate ligase from Aliivibrio fischeri (strain ATCC 700601 / ES114) (Vibrio fischeri).